We begin with the raw amino-acid sequence, 570 residues long: Probable metalloreductase AIM14 (570 aa).

Helical transmembrane passes span 21-41 (IKYGYYVLIISLVYLIGLALL), 70-90 (AIHLGILFFAVLIPFYYHYSL), 101-118 (LGRLSYALIPLNLFLTLR), 142-162 (IITVIGLLHGIFFIIKWAIDD), 177-197 (FVGFIISILVLFLLICSIGPM), 204-224 (LFYIVHNLVNVAFILLTPIHS), and 230-250 (FPFLLLNCTLLFIHIINRIVF). The Ferric oxidoreductase domain occupies 101-219 (LGRLSYALIP…NLVNVAFILL (119 aa)). One can recognise an FAD-binding FR-type domain in the interval 250 to 388 (FAKSLMILNK…GGSGISFALP (139 aa)). Polar residues predominate over residues 481 to 505 (SNFNSENADSNDNTPETSHSPTKEN). The interval 481-507 (SNFNSENADSNDNTPETSHSPTKENGS) is disordered.

The protein belongs to the ferric reductase (FRE) family. AIM14 subfamily. As to quaternary structure, interacts with ribosomes.

The protein resides in the membrane. Probable cell surface metalloreductase. May be involved in iron or copper homeostasis. The polypeptide is Probable metalloreductase AIM14 (AIM14) (Saccharomyces cerevisiae (strain RM11-1a) (Baker's yeast)).